A 401-amino-acid chain; its full sequence is Phosphoglycerate kinase (401 aa).

Residues 24–26 (DFN), Arg40, 63–66 (HFGR), Arg122, and Arg155 contribute to the substrate site. ATP contacts are provided by residues Lys206, Gly297, Glu328, and 357 to 360 (GGDS).

This sequence belongs to the phosphoglycerate kinase family. Monomer.

The protein resides in the cytoplasm. It carries out the reaction (2R)-3-phosphoglycerate + ATP = (2R)-3-phospho-glyceroyl phosphate + ADP. The protein operates within carbohydrate degradation; glycolysis; pyruvate from D-glyceraldehyde 3-phosphate: step 2/5. The protein is Phosphoglycerate kinase of Prochlorococcus marinus (strain NATL2A).